A 199-amino-acid polypeptide reads, in one-letter code: Holliday junction branch migration complex subunit RuvA (199 aa).

The domain I stretch occupies residues 1 to 62 (MIAYIKGLLA…EDGIQFFGFA (62 aa)). The segment at 63-141 (KEDEKECFLL…GMAAVEHSTL (79 aa)) is domain II. Residues 142 to 152 (QQSVITTGSGD) are flexible linker. Residues 152–199 (DEAVEALLALGYSQGEARDAVKKAQKSAPEEDLSALIKIALKELAPSR) are domain III.

Belongs to the RuvA family. Homotetramer. Forms an RuvA(8)-RuvB(12)-Holliday junction (HJ) complex. HJ DNA is sandwiched between 2 RuvA tetramers; dsDNA enters through RuvA and exits via RuvB. An RuvB hexamer assembles on each DNA strand where it exits the tetramer. Each RuvB hexamer is contacted by two RuvA subunits (via domain III) on 2 adjacent RuvB subunits; this complex drives branch migration. In the full resolvosome a probable DNA-RuvA(4)-RuvB(12)-RuvC(2) complex forms which resolves the HJ.

The protein localises to the cytoplasm. In terms of biological role, the RuvA-RuvB-RuvC complex processes Holliday junction (HJ) DNA during genetic recombination and DNA repair, while the RuvA-RuvB complex plays an important role in the rescue of blocked DNA replication forks via replication fork reversal (RFR). RuvA specifically binds to HJ cruciform DNA, conferring on it an open structure. The RuvB hexamer acts as an ATP-dependent pump, pulling dsDNA into and through the RuvAB complex. HJ branch migration allows RuvC to scan DNA until it finds its consensus sequence, where it cleaves and resolves the cruciform DNA. The protein is Holliday junction branch migration complex subunit RuvA of Desulforamulus reducens (strain ATCC BAA-1160 / DSM 100696 / MI-1) (Desulfotomaculum reducens).